The following is a 68-amino-acid chain: DNA-directed RNA polymerase subunit Rpo10 (68 aa).

C7, C10, C44, and C45 together coordinate Zn(2+).

The protein belongs to the archaeal Rpo10/eukaryotic RPB10 RNA polymerase subunit family. In terms of assembly, part of the RNA polymerase complex. It depends on Zn(2+) as a cofactor.

Its subcellular location is the cytoplasm. The enzyme catalyses RNA(n) + a ribonucleoside 5'-triphosphate = RNA(n+1) + diphosphate. DNA-dependent RNA polymerase (RNAP) catalyzes the transcription of DNA into RNA using the four ribonucleoside triphosphates as substrates. This chain is DNA-directed RNA polymerase subunit Rpo10, found in Methanococcus vannielii (strain ATCC 35089 / DSM 1224 / JCM 13029 / OCM 148 / SB).